A 251-amino-acid polypeptide reads, in one-letter code: HTH-type transcriptional regulator UlaR (251 aa).

In terms of domain architecture, HTH deoR-type spans 3–58; that stretch reads EAQRHQILLEMLAQLGFVTVEKVVERLGISPATARRDINKLDERGKLKKVRNGAEA. The H-T-H motif DNA-binding region spans 20-39; that stretch reads VTVEKVVERLGISPATARRD.

It localises to the cytoplasm. Its function is as follows. Represses ulaG and the ulaABCDEF operon. This chain is HTH-type transcriptional regulator UlaR, found in Shigella sonnei (strain Ss046).